Consider the following 66-residue polypeptide: Large ribosomal subunit protein uL29 (66 aa).

Belongs to the universal ribosomal protein uL29 family.

The sequence is that of Large ribosomal subunit protein uL29 from Rhizobium etli (strain ATCC 51251 / DSM 11541 / JCM 21823 / NBRC 15573 / CFN 42).